The sequence spans 81 residues: Cytochrome b559 subunit alpha (81 aa).

A helical transmembrane segment spans residues 21–35; the sequence is VIHALTIPALFLAGW. A heme-binding site is contributed by His23.

It belongs to the PsbE/PsbF family. Heterodimer of an alpha subunit and a beta subunit. PSII is composed of 1 copy each of membrane proteins PsbA, PsbB, PsbC, PsbD, PsbE, PsbF, PsbH, PsbI, PsbJ, PsbK, PsbL, PsbM, PsbT, PsbX, PsbY, PsbZ, Psb30/Ycf12, peripheral proteins PsbO, CyanoQ (PsbQ), PsbU, PsbV and a large number of cofactors. It forms dimeric complexes. Heme b serves as cofactor.

The protein resides in the cellular thylakoid membrane. Functionally, this b-type cytochrome is tightly associated with the reaction center of photosystem II (PSII). PSII is a light-driven water:plastoquinone oxidoreductase that uses light energy to abstract electrons from H(2)O, generating O(2) and a proton gradient subsequently used for ATP formation. It consists of a core antenna complex that captures photons, and an electron transfer chain that converts photonic excitation into a charge separation. The protein is Cytochrome b559 subunit alpha of Synechococcus sp. (strain JA-2-3B'a(2-13)) (Cyanobacteria bacterium Yellowstone B-Prime).